The sequence spans 213 residues: Calcineurin B-like protein 8 (213 aa).

A lipid anchor (N-myristoyl glycine) is attached at Gly2. EF-hand domains lie at 31 to 66 (EVEA…RNSN), 67 to 102 (KKNL…FHPE), 104 to 139 (PLGD…LLNE), and 148 to 183 (AVEQ…NPAL). The Ca(2+) site is built by Asp161, Asn163, Asp165, Lys167, and Glu172.

Belongs to the calcineurin regulatory subunit family. Homodimer. In terms of tissue distribution, expressed at low levels in roots, shoots, culms, leaves and young spikelets.

Its subcellular location is the cell membrane. Acts as a calcium sensor. May function as positive regulator of salt stress responses. CBL proteins interact with CIPK serine-threonine protein kinases. Binding of a CBL protein to the regulatory NAF domain of a CIPK protein lead to the activation of the kinase in a calcium-dependent manner. This chain is Calcineurin B-like protein 8 (CBL8), found in Oryza sativa subsp. japonica (Rice).